The chain runs to 66 residues: Opicalcin-2 (66 aa).

The signal sequence occupies residues 1 to 22 (MKPSLIIVTFIVVFMTISCVAA). The propeptide occupies 23 to 31 (DDEQETWIE). Cystine bridges form between Cys36/Cys50, Cys43/Cys54, and Cys49/Cys65. The tract at residues 55–57 (KRR) is essential for stimulation of [3H]ryanodine binding to RYR1.

It belongs to the scorpion calcin family. Expressed by the venom gland.

It is found in the secreted. Its function is as follows. This toxin stabilizes ryanodine receptor 1 (RyR1) opening in a long-lasting subconductance state (40% of the full conductance state). Furthermore, it triggers calcium release from sarcoplasmic vesicles (64.2 nM are enough to induce a sharp release, and 50% of the total calcium is released after toxin (100 nM) addition) probably by acting as a cell-penetrating peptide (CPP). In addition, it has been shown to dose-dependently stimulate ryanodine binding to RyR1 (EC(50)=3.2 nM). It also augments the bell-shaped calcium-[3H]ryanodine binding curve that is maximal at about 10 uM calcium concentration. It binds a different site as ryanodine. It acts synergistically with caffeine. In vivo, intracerebroventricular injection into mice induces neurotoxic symptoms, followed by death. This is Opicalcin-2 from Opistophthalmus carinatus (African yellow leg scorpion).